The following is a 606-amino-acid chain: Polyphenol oxidase A1, chloroplastic (606 aa).

The N-terminal 92 residues, Met-1–Ala-92, are a transit peptide targeting the chloroplast. The segment at Lys-32–Leu-63 is disordered. The segment covering Gln-35–Arg-44 has biased composition (basic residues). Cystine bridges form between Cys-103–Cys-121 and Cys-120–Cys-182. Residues His-181, His-202, His-211, His-333, His-337, and His-367 each contribute to the Cu cation site. Residues Cys-185 to His-202 constitute a cross-link (2'-(S-cysteinyl)-histidine (Cys-His)).

It belongs to the tyrosinase family. The cofactor is Cu(2+).

It is found in the plastid. The protein localises to the chloroplast thylakoid lumen. The enzyme catalyses 2 catechol + O2 = 2 1,2-benzoquinone + 2 H2O. Functionally, catalyzes the oxidation of mono- and o-diphenols to o-diquinones. The sequence is that of Polyphenol oxidase A1, chloroplastic from Vicia faba (Broad bean).